A 155-amino-acid chain; its full sequence is Large ribosomal subunit protein uL30 (155 aa).

The protein belongs to the universal ribosomal protein uL30 family. As to quaternary structure, part of the 50S ribosomal subunit.

This is Large ribosomal subunit protein uL30 from Pyrococcus furiosus (strain ATCC 43587 / DSM 3638 / JCM 8422 / Vc1).